A 253-amino-acid chain; its full sequence is H repeat-associated putative transposase YbfD (253 aa).

It belongs to the transposase 11 family.

This Escherichia coli (strain K12) protein is H repeat-associated putative transposase YbfD (ybfD).